A 156-amino-acid chain; its full sequence is Small ribosomal subunit protein uS7 (156 aa).

Belongs to the universal ribosomal protein uS7 family. In terms of assembly, part of the 30S ribosomal subunit. Contacts proteins S9 and S11.

One of the primary rRNA binding proteins, it binds directly to 16S rRNA where it nucleates assembly of the head domain of the 30S subunit. Is located at the subunit interface close to the decoding center, probably blocks exit of the E-site tRNA. The protein is Small ribosomal subunit protein uS7 of Prochlorococcus marinus (strain MIT 9303).